Reading from the N-terminus, the 397-residue chain is Enoyl-[acyl-carrier-protein] reductase [NADH] (397 aa).

NAD(+) contacts are provided by residues 48-53 (GASTGY), 74-75 (FE), 111-112 (DA), and 139-140 (AA). Residue Tyr225 participates in substrate binding. The active-site Proton donor is Tyr235. NAD(+)-binding positions include Lys244 and 273–275 (VVT).

This sequence belongs to the TER reductase family. Monomer.

It carries out the reaction a 2,3-saturated acyl-[ACP] + NAD(+) = a (2E)-enoyl-[ACP] + NADH + H(+). Its pathway is lipid metabolism; fatty acid biosynthesis. Functionally, involved in the final reduction of the elongation cycle of fatty acid synthesis (FAS II). Catalyzes the reduction of a carbon-carbon double bond in an enoyl moiety that is covalently linked to an acyl carrier protein (ACP). In Burkholderia pseudomallei (strain 1710b), this protein is Enoyl-[acyl-carrier-protein] reductase [NADH].